The primary structure comprises 246 residues: Trypsin V-B (246 aa).

The N-terminal stretch at 1–15 (MKICIFFTLLGTVAA) is a signal peptide. A propeptide spans 16 to 24 (FPTEDNDDR) (activation peptide). A Peptidase S1 domain is found at 25 to 244 (IVGGYTCQEH…YLNWIQQTVA (220 aa)). Cystine bridges form between Cys31-Cys160, Cys49-Cys65, Cys133-Cys233, Cys140-Cys206, Cys171-Cys185, and Cys196-Cys220. His64 acts as the Charge relay system in catalysis. Ca(2+) contacts are provided by Glu76, Asn78, and Glu86. The active-site Charge relay system is Asp108. Ser200 serves as the catalytic Charge relay system.

Belongs to the peptidase S1 family. It depends on Ca(2+) as a cofactor.

It is found in the secreted. Its subcellular location is the extracellular space. It catalyses the reaction Preferential cleavage: Arg-|-Xaa, Lys-|-Xaa.. The chain is Trypsin V-B from Rattus norvegicus (Rat).